Consider the following 170-residue polypeptide: Fimbrial protein (170 aa).

Positions 1 to 7 (MNTLQKG) are excised as a propeptide. Phe-8 is modified (N-methylphenylalanine). A helical transmembrane segment spans residues 8 to 28 (FTLIELMIVIAIVGILAAVAL). Ser-70 carries an O-linked (Gal...) serine glycan. Ser-100 carries the O-(sn-1-glycerophosphoryl)serine modification. A disulfide bridge links Cys-127 with Cys-163.

This sequence belongs to the N-Me-Phe pilin family. As to quaternary structure, the pili are polar flexible filaments of about 5.4 nanometers diameter and 2.5 micrometers average length; they consist of only a single polypeptide chain arranged in a helical configuration of five subunits per turn in the assembled pilus. O-linked glycan consists of GlcNAc-Gal disaccharide.

It localises to the fimbrium. The protein localises to the membrane. Functionally, major component of the type IV pilus (T4P) that plays a role in cellular adherence, microcolony formation as well as twitching motility. The sequence is that of Fimbrial protein (pilE) from Neisseria meningitidis serogroup A / serotype 4A (strain DSM 15465 / Z2491).